The chain runs to 290 residues: Prepilin leader peptidase/N-methyltransferase (290 aa).

Residues 13-33 form a helical membrane-spanning segment; sequence AFVLCTILLGLLVGSFLNVVV. Zn(2+) contacts are provided by cysteine 72, cysteine 75, cysteine 97, and cysteine 100. The next 5 membrane-spanning stretches (helical) occupy residues 128 to 148, 158 to 178, 183 to 203, 228 to 248, and 261 to 276; these read FTWQAGAMLLLTWGLLAMSLI, VLVLPLLWLGLIANHFGLFAS, LFGAVFGYLSLWSVFWLFKLV, ILPLTILLSSLVGAILGVIML, and FGPYLAIAGWIALLWG.

It belongs to the peptidase A24 family. Zn(2+) is required as a cofactor.

Its subcellular location is the cell inner membrane. The enzyme catalyses Typically cleaves a -Gly-|-Phe- bond to release an N-terminal, basic peptide of 5-8 residues from type IV prepilin, and then N-methylates the new N-terminal amino group, the methyl donor being S-adenosyl-L-methionine.. Functionally, plays an essential role in type IV pili and type II pseudopili formation by proteolytically removing the leader sequence from substrate proteins and subsequently monomethylating the alpha-amino group of the newly exposed N-terminal phenylalanine. Substrates include proteins required for pilus biogenesis PilE, PilV, PilW, and PilX as well as some components of the type II general secretory apparatus GspG, GspH, GspI and GspJ. This Pseudomonas aeruginosa (strain ATCC 15692 / DSM 22644 / CIP 104116 / JCM 14847 / LMG 12228 / 1C / PRS 101 / PAO1) protein is Prepilin leader peptidase/N-methyltransferase (pilD).